Here is a 155-residue protein sequence, read N- to C-terminus: 3-dehydroquinate dehydratase (155 aa).

Catalysis depends on Y22, which acts as the Proton acceptor. Substrate-binding residues include N73, H79, and D86. H99 acts as the Proton donor in catalysis. Substrate contacts are provided by residues 100-101 and R110; that span reads IS.

The protein belongs to the type-II 3-dehydroquinase family. In terms of assembly, homododecamer.

The catalysed reaction is 3-dehydroquinate = 3-dehydroshikimate + H2O. Its pathway is metabolic intermediate biosynthesis; chorismate biosynthesis; chorismate from D-erythrose 4-phosphate and phosphoenolpyruvate: step 3/7. Functionally, catalyzes a trans-dehydration via an enolate intermediate. This Campylobacter hominis (strain ATCC BAA-381 / DSM 21671 / CCUG 45161 / LMG 19568 / NCTC 13146 / CH001A) protein is 3-dehydroquinate dehydratase.